The following is a 213-amino-acid chain: Probable GTP-binding protein EngB (213 aa).

Residues 30-204 (EGFEVAFAGR…YTVLAGWMEL (175 aa)) enclose the EngB-type G domain. GTP-binding positions include 38-45 (GRSNAGKS), 64-68 (GRTQL), 82-85 (DLPG), 149-152 (TKAD), and 182-185 (LFSA). Serine 45 and threonine 66 together coordinate Mg(2+).

The protein belongs to the TRAFAC class TrmE-Era-EngA-EngB-Septin-like GTPase superfamily. EngB GTPase family. It depends on Mg(2+) as a cofactor.

In terms of biological role, necessary for normal cell division and for the maintenance of normal septation. The protein is Probable GTP-binding protein EngB of Pseudomonas fluorescens (strain ATCC BAA-477 / NRRL B-23932 / Pf-5).